Reading from the N-terminus, the 55-residue chain is Ribosome biogenesis protein Nop10 (55 aa).

Belongs to the NOP10 family.

Its function is as follows. Involved in ribosome biogenesis; more specifically in 18S rRNA pseudouridylation and in cleavage of pre-rRNA. This Methanosphaera stadtmanae (strain ATCC 43021 / DSM 3091 / JCM 11832 / MCB-3) protein is Ribosome biogenesis protein Nop10.